The following is a 339-amino-acid chain: UDP-glucose 4-epimerase (339 aa).

NAD(+) contacts are provided by residues 12–13, 32–37, 59–60, 81–85, Asn-100, Ser-125, Tyr-150, Lys-154, and Phe-179; these read FI, DNLCNS, DI, and FAGLK. Positions 125 and 150 each coordinate substrate. Residue Tyr-150 is the Proton acceptor of the active site. Substrate is bound by residues Asn-180, 200–201, 217–219, Arg-232, and 293–296; these read NL, AVF, and RAGD.

Belongs to the NAD(P)-dependent epimerase/dehydratase family. In terms of assembly, homodimer. The cofactor is NAD(+).

It catalyses the reaction UDP-alpha-D-glucose = UDP-alpha-D-galactose. Its pathway is carbohydrate metabolism; galactose metabolism. Its function is as follows. Involved in the metabolism of galactose. Plays an essential role in the incorporation of galactose into meningococcal lipopolysaccharide surface molecules, which are important for pathogenesis. Catalyzes the conversion of UDP-galactose (UDP-Gal) to UDP-glucose (UDP-Glc) through a mechanism involving the transient reduction of NAD. The chain is UDP-glucose 4-epimerase (galE) from Neisseria meningitidis serogroup C.